The primary structure comprises 520 residues: MVDEELFDKSSNDHSISSEEEDMLVRSYSNLNVSFGYHCNSYQCFSLDTDEYDISPNKRLETNTMMTSQNGSFTCLSGAAISANFTLANTNICKGLIGEEILPELDSPNSFRKIVSSPSMSRLDLLSTSQGSPVSTESSIFEISKNIWRSSAPTTVSSNFLTSTEIKMAGGAAGEDRVQAVCSEKNGWLICGIYDGFNGRDAADFLAVTLYDNIVYYLYLLECRIKQENGLYGSPEGSLNGVKSELTLAMRFAENEDVKFSETFRAGVLKCLTTAVEQAENDFLCMVEQEMDDRPDLVSVGSCVLVVLLHGTDLCILNLGDSRAVLASVPSSGMDKLKAVQLTEIHSLENPLEYQKLLADHPNEPSVVMGNKIKGKLKVTRAFGVGYLKQKKLNDALMGILRVRNLCSPPYVYTNPHTVSHKVTEDDLFVVLGSDGLFDFFSNDEVVQLVYQFMHDNPIGDPAKYLIEQLLLKAAKEAALTAEELMRIPVGSRRKYHDDVTIIVIILGNAQRTMTASTSL.

A PPM-type phosphatase domain is found at 160 to 507 (FLTSTEIKMA…DDVTIIVIIL (348 aa)). The Mn(2+) site is built by aspartate 195, glycine 196, aspartate 435, and aspartate 498.

This sequence belongs to the PP2C family. It depends on Mg(2+) as a cofactor. Mn(2+) serves as cofactor.

The catalysed reaction is O-phospho-L-seryl-[protein] + H2O = L-seryl-[protein] + phosphate. The enzyme catalyses O-phospho-L-threonyl-[protein] + H2O = L-threonyl-[protein] + phosphate. The chain is Probable protein phosphatase 2C 39 from Oryza sativa subsp. japonica (Rice).